The chain runs to 146 residues: Protein archease (146 aa).

Ca(2+) is bound by residues Asp-16, Asp-145, and Ile-146.

It belongs to the archease family.

Its function is as follows. Activates the tRNA-splicing ligase complex by facilitating the enzymatic turnover of catalytic subunit RtcB. Acts by promoting the guanylylation of RtcB, a key intermediate step in tRNA ligation. Can also alter the NTP specificity of RtcB such that ATP, dGTP or ITP is used efficiently. This Methanosarcina barkeri (strain Fusaro / DSM 804) protein is Protein archease.